The chain runs to 189 residues: GMP synthase [glutamine-hydrolyzing] subunit A (189 aa).

Residues 5–189 form the Glutamine amidotransferase type-1 domain; it reads KILVVNNYGQ…MNFFEVCDLY (185 aa). C79 acts as the Nucleophile in catalysis. Catalysis depends on residues H166 and E168.

As to quaternary structure, heterodimer composed of a glutamine amidotransferase subunit (A) and a GMP-binding subunit (B).

The catalysed reaction is XMP + L-glutamine + ATP + H2O = GMP + L-glutamate + AMP + diphosphate + 2 H(+). It functions in the pathway purine metabolism; GMP biosynthesis; GMP from XMP (L-Gln route): step 1/1. Catalyzes the synthesis of GMP from XMP. This chain is GMP synthase [glutamine-hydrolyzing] subunit A, found in Methanosarcina mazei (strain ATCC BAA-159 / DSM 3647 / Goe1 / Go1 / JCM 11833 / OCM 88) (Methanosarcina frisia).